The following is a 205-amino-acid chain: Transcriptional regulator GfcR (205 aa).

This sequence belongs to the purine/pyrimidine phosphoribosyltransferase family. GfcR subfamily.

This Methanococcus maripaludis (strain C5 / ATCC BAA-1333) protein is Transcriptional regulator GfcR.